Consider the following 315-residue polypeptide: Probable carboxylesterase 3 (315 aa).

Met-1 carries the post-translational modification N-acetylmethionine. Residues 81-83 (HGG) carry the Involved in the stabilization of the negatively charged intermediate by the formation of the oxyanion hole motif. Catalysis depends on residues Ser-160, Asp-258, and His-290.

This sequence belongs to the 'GDXG' lipolytic enzyme family. In terms of tissue distribution, expressed in flowers and siliques.

It carries out the reaction a carboxylic ester + H2O = an alcohol + a carboxylate + H(+). Functionally, carboxylesterase acting on esters with varying acyl chain length. The chain is Probable carboxylesterase 3 (CXE3) from Arabidopsis thaliana (Mouse-ear cress).